A 2321-amino-acid chain; its full sequence is Neurogenic locus notch homolog protein 3 (2321 aa).

The segment covering 1–14 (MGPGARGRRRRRRP) has biased composition (basic residues). The segment at 1-26 (MGPGARGRRRRRRPMSPPPPPPPVRA) is disordered. Positions 1–39 (MGPGARGRRRRRRPMSPPPPPPPVRALPLLLLLAGPGAA) are cleaved as a signal peptide. The segment covering 15–25 (MSPPPPPPPVR) has biased composition (pro residues). EGF-like domains lie at 40–77 (APPCLDGSPCANGGRCTQLPSREAACLCPPGWVGERCQ), 78–118 (LEDP…PDCS), and 119–156 (LPDPCLSSPCAHGARCSVGPDGRFLCSCPPGYQGRSCR). The Extracellular portion of the chain corresponds to 40 to 1643 (APPCLDGSPC…LEPPEPSVPL (1604 aa)). 99 disulfides stabilise this stretch: cysteine 43–cysteine 55, cysteine 49–cysteine 65, cysteine 67–cysteine 76, cysteine 82–cysteine 93, cysteine 87–cysteine 106, cysteine 108–cysteine 117, cysteine 123–cysteine 134, cysteine 128–cysteine 144, cysteine 146–cysteine 155, cysteine 162–cysteine 174, cysteine 168–cysteine 183, cysteine 185–cysteine 194, cysteine 201–cysteine 212, cysteine 206–cysteine 222, cysteine 224–cysteine 233, cysteine 240–cysteine 251, cysteine 245–cysteine 260, cysteine 262–cysteine 271, cysteine 278–cysteine 291, cysteine 285–cysteine 300, cysteine 302–cysteine 311, cysteine 318–cysteine 329, cysteine 323–cysteine 338, cysteine 340–cysteine 349, cysteine 355–cysteine 366, cysteine 360–cysteine 377, cysteine 379–cysteine 388, cysteine 395–cysteine 408, cysteine 402–cysteine 417, cysteine 419–cysteine 428, cysteine 435–cysteine 446, cysteine 440–cysteine 455, cysteine 457–cysteine 466, cysteine 473–cysteine 484, cysteine 478–cysteine 493, cysteine 495–cysteine 504, cysteine 511–cysteine 522, cysteine 516–cysteine 531, cysteine 533–cysteine 542, cysteine 549–cysteine 559, cysteine 554–cysteine 568, cysteine 570–cysteine 579, cysteine 586–cysteine 597, cysteine 591–cysteine 606, cysteine 608–cysteine 617, cysteine 624–cysteine 634, cysteine 629–cysteine 643, cysteine 645–cysteine 654, cysteine 661–cysteine 672, cysteine 666–cysteine 681, cysteine 683–cysteine 692, cysteine 699–cysteine 709, cysteine 704–cysteine 718, cysteine 720–cysteine 729, cysteine 738–cysteine 749, cysteine 743–cysteine 758, cysteine 760–cysteine 769, cysteine 775–cysteine 786, cysteine 780–cysteine 796, cysteine 798–cysteine 807, cysteine 814–cysteine 826, cysteine 820–cysteine 835, cysteine 837–cysteine 846, cysteine 853–cysteine 864, cysteine 858–cysteine 873, cysteine 875–cysteine 884, cysteine 891–cysteine 901, cysteine 896–cysteine 910, cysteine 912–cysteine 921, cysteine 928–cysteine 939, cysteine 933–cysteine 948, cysteine 950–cysteine 959, cysteine 966–cysteine 977, cysteine 971–cysteine 986, cysteine 988–cysteine 997, cysteine 1004–cysteine 1015, cysteine 1009–cysteine 1022, cysteine 1024–cysteine 1033, cysteine 1040–cysteine 1061, cysteine 1055–cysteine 1070, cysteine 1072–cysteine 1081, cysteine 1088–cysteine 1099, cysteine 1093–cysteine 1108, cysteine 1110–cysteine 1119, cysteine 1126–cysteine 1137, cysteine 1131–cysteine 1146, cysteine 1148–cysteine 1157, cysteine 1164–cysteine 1182, cysteine 1176–cysteine 1191, cysteine 1193–cysteine 1202, cysteine 1209–cysteine 1222, cysteine 1214–cysteine 1232, cysteine 1234–cysteine 1243, cysteine 1250–cysteine 1261, cysteine 1255–cysteine 1275, cysteine 1277–cysteine 1286, cysteine 1293–cysteine 1304, cysteine 1298–cysteine 1313, and cysteine 1315–cysteine 1324. The region spanning 158-195 (DVDECRVGEPCRHGGTCLNTPGSFRCQCPAGYTGPLCE) is the EGF-like 4; calcium-binding domain. Positions 197 to 234 (PAVPCAPSPCRNGGTCRQSGDLTYDCACLPGFEGQNCE) constitute an EGF-like 5 domain. The region spanning 236-272 (NVDDCPGHRCLNGGTCVDGVNTYNCQCPPEWTGQFCT) is the EGF-like 6; calcium-binding domain. The region spanning 274–312 (DVDECQLQPNACHNGGTCFNTLGGHSCVCVNGWTGESCS) is the EGF-like 7 domain. The EGF-like 8; calcium-binding domain maps to 314-350 (NIDDCATAVCFHGATCHDRVASFYCACPMGKTGLLCH). Residues 351 to 389 (LDDACVSNPCHEDAICDTNPVNGRAICTCPPGFTGGACD) form the EGF-like 9 domain. The region spanning 391–429 (DVDECSIGANPCEHLGRCVNTQGSFLCQCGRGYTGPRCE) is the EGF-like 10; calcium-binding domain. Positions 431 to 467 (DVNECLSGPCRNQATCLDRIGQFTCICMAGFTGTYCE) constitute an EGF-like 11; calcium-binding domain. The EGF-like 12; calcium-binding domain maps to 469-505 (DIDECQSSPCVNGGVCKDRVNGFSCTCPSGFSGSTCQ). An EGF-like 13; calcium-binding domain is found at 507 to 543 (DVDECASTPCRNGAKCVDQPDGYECRCAEGFEGTLCD). An EGF-like 14; calcium-binding domain is found at 545 to 580 (NVDDCSPDPCHHGRCVDGIASFSCACAPGYTGTRCE). An EGF-like 15; calcium-binding domain is found at 582 to 618 (QVDECRSQPCRHGGKCLDLVDKYLCRCPSGTTGVNCE). In terms of domain architecture, EGF-like 16; calcium-binding spans 620–655 (NIDDCASNPCTFGVCRDGINRYDCVCQPGFTGPLCN). Residues 657–693 (EINECASSPCGEGGSCVDGENGFRCLCPPGSLPPLCL) enclose the EGF-like 17; calcium-binding domain. EGF-like domains lie at 695-730 (PSHPCAHEPCSHGICYDAPGGFRCVCEPGWSGPRCS), 734-770 (ARDACESQPCRAGGTCSSDGMGFHCTCPPGVQGRQCE), and 771-808 (LLSPCTPNPCEHGGRCESAPGQLPVCSCPQGWQGPRCQ). In terms of domain architecture, EGF-like 21; calcium-binding spans 810-847 (DVDECAGPAPCGPHGICTNLAGSFSCTCHGGYTGPSCD). One can recognise an EGF-like 22; calcium-binding domain in the interval 849–885 (DINDCDPNPCLNGGSCQDGVGSFSCSCLPGFAGPRCA). One can recognise an EGF-like 23; calcium-binding domain in the interval 887–922 (DVDECLSNPCGPGTCTDHVASFTCTCPPGYGGFHCE). 5 EGF-like domains span residues 924 to 960 (DLPDCSPSSCFNGGTCVDGVNSFSCLCRPGYTGAHCQ), 962 to 998 (EADPCLSRPCLHGGVCSAAHPGFRCTCLESFTGPQCQ), 1000 to 1034 (LVDWCSRQPCQNGGRCVQTGAYCLCPPGWSGRLCD), 1036 to 1082 (RSLP…SHCE), and 1084 to 1120 (EVDPCLAQPCQHGGTCRGYMGGYMCECLPGYNGDNCE). Positions 1122–1158 (DVDECASQPCQHGGSCIDLVARYLCSCPPGTLGVLCE) constitute an EGF-like 29; calcium-binding domain. The EGF-like 30; calcium-binding domain maps to 1160–1203 (NEDDCGPGPPLDSGPRCLHNGTCVDLVGGFRCTCPPGYTGLRCE). Asparagine 1179 is a glycosylation site (N-linked (GlcNAc...) asparagine). EGF-like domains lie at 1205 to 1244 (DINECRSGACHAAHTRDCLQDPGGGFRCLCHAGFSGPRCQ), 1246 to 1287 (VLSP…PRCE), 1289 to 1325 (VARSCRELQCPVGVPCQQTPRGPRCACPPGLSGPSCR), and 1335 to 1373 (SNASCAAAPCLHGGSCRPAPLAPFFRCACAQGWTGPRCE). N-linked (GlcNAc...) asparagine glycosylation is present at asparagine 1336. Disulfide bonds link cysteine 1339/cysteine 1350, cysteine 1344/cysteine 1361, cysteine 1363/cysteine 1372, cysteine 1387/cysteine 1410, cysteine 1392/cysteine 1405, cysteine 1401/cysteine 1417, cysteine 1428/cysteine 1451, cysteine 1433/cysteine 1446, cysteine 1442/cysteine 1458, cysteine 1467/cysteine 1493, cysteine 1475/cysteine 1488, and cysteine 1484/cysteine 1500. LNR repeat units follow at residues 1387 to 1427 (CPRA…PWRQ), 1428 to 1458 (CEALQCWRLFNNSRCDPACSSPACLYDNFDC), and 1467 to 1505 (CNPVYEKYCADHFADGRCDQGCNTEECGWDGLDCASEVP). An N-linked (GlcNAc...) asparagine glycan is attached at asparagine 1438. Residues 1644–1664 (LPLLVAGAVLLLVILVLGVMV) form a helical membrane-spanning segment. Topologically, residues 1665-2321 (ARRKREHSTL…EVTPKRQVLA (657 aa)) are cytoplasmic. ANK repeat units follow at residues 1838–1867 (TGETALHLAARYARADAAKRLLDAGADTNA), 1871–1901 (SGRTPLHTAVTADAQGVFQILIRNRSTDLDA), 1905–1934 (DGSTALILAARLAVEGMVEELIASHADVNA), 1938–1967 (LGKSALHWAAAVNNVEATLALLKNGANKDM), and 1971–2000 (KEETPLFLAAREGSYEAAKLLLDHFANREI). Residues 2024 to 2120 (LDQPSGPRSP…FGGPPASPGG (97 aa)) form a disordered region. Positions 2039–2053 (LGPLLCPPGAFLPGL) are enriched in low complexity. Arginine 2174 carries the omega-N-methylarginine modification. The tract at residues 2190 to 2321 (APGPQLLNPG…EVTPKRQVLA (132 aa)) is disordered. Low complexity predominate over residues 2269-2289 (STPSPATATGAMATTTGALPA). Residues 2296–2308 (VPSSLAQAQTQLG) are compositionally biased toward polar residues.

The protein belongs to the NOTCH family. In terms of assembly, heterodimer of a C-terminal fragment N(TM) and a N-terminal fragment N(EC) which are probably linked by disulfide bonds. Interacts with MAML1, MAML2 and MAML3 which act as transcriptional coactivators for NOTCH3. Interacts with PSMA1. Interacts with HIF1AN. In terms of processing, synthesized in the endoplasmic reticulum as an inactive form which is proteolytically cleaved by a furin-like convertase in the trans-Golgi network before it reaches the plasma membrane to yield an active, ligand-accessible form. Cleavage results in a C-terminal fragment N(TM) and a N-terminal fragment N(EC). Following ligand binding, it is cleaved by TNF-alpha converting enzyme (TACE) to yield a membrane-associated intermediate fragment called notch extracellular truncation (NEXT). This fragment is then cleaved by presenilin dependent gamma-secretase to release a notch-derived peptide containing the intracellular domain (NICD) from the membrane. Post-translationally, phosphorylated. Hydroxylated by HIF1AN. Ubiquitously expressed in fetal and adult tissues.

Its subcellular location is the cell membrane. The protein localises to the nucleus. Functionally, functions as a receptor for membrane-bound ligands Jagged1, Jagged2 and Delta1 to regulate cell-fate determination. Upon ligand activation through the released notch intracellular domain (NICD) it forms a transcriptional activator complex with RBPJ/RBPSUH and activates genes of the enhancer of split locus. Affects the implementation of differentiation, proliferation and apoptotic programs. In Homo sapiens (Human), this protein is Neurogenic locus notch homolog protein 3 (NOTCH3).